The sequence spans 972 residues: 116 kDa U5 small nuclear ribonucleoprotein component (972 aa).

Residues 1–53 (MDTDLYDEFGNYIGPELDSDDEDDELGRESKELDELEDDDDDDDMGDHDEDHP) are disordered. 2 stretches are compositionally biased toward acidic residues: residues 17-26 (LDSDDEDDEL) and 34-48 (DELE…MGDH). Residues 127–409 (ELIRNVTLCG…GIHLTKEELK (283 aa)) enclose the tr-type G domain. GTP is bound by residues 136 to 143 (GHLHHGKT), 204 to 208 (DTPGH), and 258 to 261 (NKID).

The protein belongs to the TRAFAC class translation factor GTPase superfamily. Classic translation factor GTPase family. EF-G/EF-2 subfamily. As to quaternary structure, component of the U5 snRNP and the U4/U6-U5 tri-snRNP complex, a building block of the spliceosome. Component of the pre-catalytic, catalytic and post-catalytic spliceosome complexes. Component of the minor spliceosome, which splices U12-type introns.

Its subcellular location is the nucleus. Required for pre-mRNA splicing as component of the spliceosome, including pre-catalytic, catalytic and post-catalytic spliceosomal complexes. Component of the U5 snRNP and the U4/U6-U5 tri-snRNP complex, a building block of the spliceosome. As a component of the minor spliceosome, involved in the splicing of U12-type introns in pre-mRNAs. The protein is 116 kDa U5 small nuclear ribonucleoprotein component (EFTUD2) of Gallus gallus (Chicken).